Here is a 469-residue protein sequence, read N- to C-terminus: MKKLAKMISIATLGACAFSAHALDGKLVPNEGVLVSVGQDVDSVNDYSSAMSTTPAGVTNYVGIVNLDGLASNADAGAGRNNVVELANLYPTSALIVGVSMNGQIQNVAQGQYNANIDTLIQTLGELDRPVYLRWAYEVDGPWNGHNTEDLKQSFRNVYQRIRELGYGDNISMIWQVASYCPTAPGQLSSWWPGDDVVDWVGLSYFAPQDCNWDRVNEAAQWARSHNKPLFINESSPQRYQLADRTYSSDPAKGTNRQSKTEQQIWSEWFAPYFQFMEDNKDILKGFTYINADWDSQWRWAAPYNEGYWGDSRVQVLPYIKQQWQDTLENPKFINHSSDLFAKLGYVADGGDNGGDNGGDNGGDNGGDNGGDNGGTEPPENCQDDFNFNYVSDQEIEVYHVDKGWSAGWNYVCLNDYCLPGNKSNGAFRKTFNAVLGQDYKLTFKVEDRYGQGQQILDRNITFTTQVCN.

The first 22 residues, 1–22 (MKKLAKMISIATLGACAFSAHA), serve as a signal peptide directing secretion. The region spanning 23-293 (LDGKLVPNEG…LKGFTYINAD (271 aa)) is the GH26 domain. E138 functions as the Proton donor in the catalytic mechanism. E234 serves as the catalytic Nucleophile. A compositionally biased stretch (gly residues) spans 352-374 (DNGGDNGGDNGGDNGGDNGGDNG). A disordered region spans residues 352–380 (DNGGDNGGDNGGDNGGDNGGDNGGTEPPE). Positions 377-469 (EPPENCQDDF…NITFTTQVCN (93 aa)) are carbohydrate binding module (CBM). 2 cysteine pairs are disulfide-bonded: C382–C468 and C413–C418.

Belongs to the glycosyl hydrolase 26 family.

It carries out the reaction Random hydrolysis of (1-&gt;3)-beta-D-glycosidic linkages in (1-&gt;3)-beta-D-xylans.. Completely inhibited by CuCl(2), FeCl(3), HgCl(2) and N-bromosuccinimide. Moderately inhibited by AgCl, AlCl(3), Pb(CH(3)COO)(2) and dithiothreitol. BaCl(2), CaCl(2), KCl, MgCl(2), MnCl(2), NaCl, ZnCl(2), ethylenediaminetetraacetic acid, N-ethylmaleimide, iodoacetic acid and p-chloromercuribenzoic acid have little or no effect on activity. Catalyzes the hydrolysis of beta-1,3-xylan into oligosaccharides, mainly xylotriose and xylobiose with smaller amounts of xylotetraose, xylose, xylopentaose and xylohexaose. Does not hydrolyze xylobiose, p-nitrophenyl-beta-xyloside, beta-1,4-xylan, carboxymethylcellulose, curdlan, glucomannan or beta-1,4-mannan. The polypeptide is Beta-1,3-xylanase (Alcaligenes sp).